The sequence spans 448 residues: Binary larvicide subunit BinB (448 aa).

Residues 1 to 198 (MCDSKDNSGV…TAFVNSSFYA (198 aa)) form a beta-trefoil domain region. The cysteines at positions 67 and 161 are disulfide-linked. The tract at residues 199–448 (AAIPQLPQTS…NEELIPKINQ (250 aa)) is probable pore-forming domain.

The protein belongs to the toxin_10 family. In terms of assembly, forms a heterodimer with BinA. Upon toxin crystal solubilization with NaOH at pH 12, only the 63-kDa (binB) and 43-kDa (binA) proteins were detected. Interacts with mosquito protein Cpm1 which acts as its host receptor. Post-translationally, processed by proteases extracted from C.pipiens larval gut; unlike its partner BinA, it does not form a stable digestion product.

Its subcellular location is the spore. It is found in the perispore. Component of a binary toxin active against Culex and some Aedes mosquito larvae. This subunit alone has no toxic larvicidal activity. This subunit is responsible for localized binding to specific regions of the host larval gut. Binary toxin internalization into host gut cells requires both proteins. The sequence is that of Binary larvicide subunit BinB (binB) from Lysinibacillus sphaericus (Bacillus sphaericus).